Here is a 133-residue protein sequence, read N- to C-terminus: Putative biopolymer transport protein ExbD-like 2 (133 aa).

Topologically, residues 1-9 (MKKVESMNV) are cytoplasmic. A helical transmembrane segment spans residues 10-30 (VPFIDIMLVLLVIVLTTASFV). The Periplasmic segment spans residues 31 to 133 (QTSKLPISIP…LVEDKKNQKN (103 aa)).

This sequence belongs to the ExbD/TolR family.

Its subcellular location is the cell inner membrane. This Helicobacter pylori (strain J99 / ATCC 700824) (Campylobacter pylori J99) protein is Putative biopolymer transport protein ExbD-like 2.